The following is a 1358-amino-acid chain: Phosphoinositide 3-kinase regulatory subunit 4 (1358 aa).

A lipid anchor (N-myristoyl glycine) is attached at G2. Residues F26 to L324 enclose the Protein kinase domain. ATP-binding positions include L32–V40 and K53. D148 functions as the Proton acceptor in the catalytic mechanism. 7 HEAT repeats span residues N373–V411, I413–E450, I458–R495, Q531–R570, K572–W610, S612–L648, and D690–R726. Phosphoserine is present on residues S808, S813, S853, and S865. Positions L875–C899 are disordered. WD repeat units follow at residues E991–T1030, R1040–S1079, K1093–T1134, L1139–S1178, P1182–T1223, and P1237–V1278. The interval K1307 to V1326 is disordered. Residues D1315–V1326 show a composition bias toward basic and acidic residues. T1316 is modified (phosphothreonine). One copy of the WD 7 repeat lies at G1327–K1358.

It belongs to the protein kinase superfamily. Ser/Thr protein kinase family. In terms of assembly, component of the PI3K (PI3KC3/PI3K-III/class III phosphatidylinositol 3-kinase) complex the core of which is composed of the catalytic subunit PIK3C3, the regulatory subunit PIK3R4 and BECN1 associating with additional regulatory/auxiliary subunits to form alternative complex forms. Alternative complex forms containing a fourth regulatory subunit in a mutually exclusive manner are PI3K complex I (PI3KC3-C1) containing ATG14, and PI3K complex II (PI3KC3-C2) containing UVRAG. PI3KC3-C1 displays a V-shaped architecture with PIK3R4 serving as a bridge between PIK3C3 and the ATG14:BECN1 subcomplex. Both, PI3KC3-C1 and PI3KC3-C2, can associate with further regulatory subunits, such as RUBCN, SH3GLB1/Bif-1, AMBRA1 and NRBF2. PI3KC3-C1 probably associates with PIK3CB. Interacts with RAB7A in the presence of PIK3C3/VPS34. Interacts with NRBF2. Interacts with ARMC3. Mn(2+) serves as cofactor. Myristoylated. In terms of processing, probably autophosphorylated.

Its subcellular location is the late endosome. The protein localises to the cytoplasmic vesicle. It is found in the autophagosome. The protein resides in the membrane. It catalyses the reaction L-seryl-[protein] + ATP = O-phospho-L-seryl-[protein] + ADP + H(+). It carries out the reaction L-threonyl-[protein] + ATP = O-phospho-L-threonyl-[protein] + ADP + H(+). Its function is as follows. Regulatory subunit of the PI3K complex that mediates formation of phosphatidylinositol 3-phosphate; different complex forms are believed to play a role in multiple membrane trafficking pathways: PI3KC3-C1 is involved in initiation of autophagosomes and PI3KC3-C2 in maturation of autophagosomes and endocytosis. Involved in regulation of degradative endocytic trafficking and cytokinesis, probably in the context of PI3KC3-C2. In terms of biological role, regulatory subunit of the PI3K complex. May regulate membrane trafficking late in the endocytic pathway. The chain is Phosphoinositide 3-kinase regulatory subunit 4 (PIK3R4) from Pongo abelii (Sumatran orangutan).